A 51-amino-acid polypeptide reads, in one-letter code: Insulin (51 aa).

Cystine bridges form between Cys8-Cys37, Cys20-Cys50, and Cys36-Cys41.

It belongs to the insulin family. Heterodimer of a B chain and an A chain linked by two disulfide bonds.

It is found in the secreted. Insulin decreases blood glucose concentration. It increases cell permeability to monosaccharides, amino acids and fatty acids. It accelerates glycolysis, the pentose phosphate cycle, and glycogen synthesis in liver. This Gadus morhua subsp. callarias (Baltic cod) protein is Insulin (ins).